A 518-amino-acid chain; its full sequence is ATP synthase subunit alpha (518 aa).

169–176 provides a ligand contact to ATP; sequence GDRQTGKT.

It belongs to the ATPase alpha/beta chains family. As to quaternary structure, F-type ATPases have 2 components, CF(1) - the catalytic core - and CF(0) - the membrane proton channel. CF(1) has five subunits: alpha(3), beta(3), gamma(1), delta(1), epsilon(1). CF(0) has three main subunits: a(1), b(2) and c(9-12). The alpha and beta chains form an alternating ring which encloses part of the gamma chain. CF(1) is attached to CF(0) by a central stalk formed by the gamma and epsilon chains, while a peripheral stalk is formed by the delta and b chains.

The protein resides in the cell membrane. The catalysed reaction is ATP + H2O + 4 H(+)(in) = ADP + phosphate + 5 H(+)(out). In terms of biological role, produces ATP from ADP in the presence of a proton gradient across the membrane. The alpha chain is a regulatory subunit. This Mycoplasma pneumoniae (strain ATCC 29342 / M129 / Subtype 1) (Mycoplasmoides pneumoniae) protein is ATP synthase subunit alpha.